The chain runs to 75 residues: ATP synthase subunit c (75 aa).

Helical transmembrane passes span 8–28 (FLGI…VSNI) and 54–74 (AALT…LIFV).

The protein belongs to the ATPase C chain family. F-type ATPases have 2 components, F(1) - the catalytic core - and F(0) - the membrane proton channel. F(1) has five subunits: alpha(3), beta(3), gamma(1), delta(1), epsilon(1). F(0) has three main subunits: a(1), b(2) and c(10-14). The alpha and beta chains form an alternating ring which encloses part of the gamma chain. F(1) is attached to F(0) by a central stalk formed by the gamma and epsilon chains, while a peripheral stalk is formed by the delta and b chains.

The protein localises to the cell inner membrane. In terms of biological role, f(1)F(0) ATP synthase produces ATP from ADP in the presence of a proton or sodium gradient. F-type ATPases consist of two structural domains, F(1) containing the extramembraneous catalytic core and F(0) containing the membrane proton channel, linked together by a central stalk and a peripheral stalk. During catalysis, ATP synthesis in the catalytic domain of F(1) is coupled via a rotary mechanism of the central stalk subunits to proton translocation. Its function is as follows. Key component of the F(0) channel; it plays a direct role in translocation across the membrane. A homomeric c-ring of between 10-14 subunits forms the central stalk rotor element with the F(1) delta and epsilon subunits. This Neorickettsia sennetsu (strain ATCC VR-367 / Miyayama) (Ehrlichia sennetsu) protein is ATP synthase subunit c.